A 423-amino-acid chain; its full sequence is Adenylosuccinate synthetase (423 aa).

GTP-binding positions include 12-18 (GDEGKGK) and 40-42 (GHT). Residue aspartate 13 is the Proton acceptor of the active site. Mg(2+)-binding residues include aspartate 13 and glycine 40. IMP contacts are provided by residues 13–16 (DEGK), 38–41 (NAGH), threonine 129, arginine 143, glutamine 224, threonine 239, and arginine 303. Histidine 41 (proton donor) is an active-site residue. Residue 299–305 (ATTGRKR) participates in substrate binding. GTP contacts are provided by residues arginine 305, 331–333 (KGD), and 412–414 (SVG).

Belongs to the adenylosuccinate synthetase family. In terms of assembly, homodimer. The cofactor is Mg(2+).

It is found in the cytoplasm. It catalyses the reaction IMP + L-aspartate + GTP = N(6)-(1,2-dicarboxyethyl)-AMP + GDP + phosphate + 2 H(+). It functions in the pathway purine metabolism; AMP biosynthesis via de novo pathway; AMP from IMP: step 1/2. Functionally, plays an important role in the de novo pathway of purine nucleotide biosynthesis. Catalyzes the first committed step in the biosynthesis of AMP from IMP. In Christiangramia forsetii (strain DSM 17595 / CGMCC 1.15422 / KT0803) (Gramella forsetii), this protein is Adenylosuccinate synthetase.